A 284-amino-acid polypeptide reads, in one-letter code: Cell wall mannoprotein 1 (284 aa).

A signal peptide spans 1 to 17 (MRFSALLVTLGLTGALA). Residues 176 to 234 (SSTGTASSSAPATETATATETSTATGTVTETATSTPVIPTGTASGSASATPSTTATPTT) are compositionally biased toward low complexity. Residues 176–252 (SSTGTASSSA…SSTGTATAST (77 aa)) are disordered.

This sequence belongs to the cell wall mannoprotein 1 family. Post-translationally, galactomannoprotein, glycosylated.

It localises to the secreted. The protein resides in the cell wall. In terms of biological role, constitutive protein of the cell wall. Antigen target of host humoral immune response. In Aspergillus fumigatus (Neosartorya fumigata), this protein is Cell wall mannoprotein 1.